The primary structure comprises 602 residues: MQSERQKYIRNFSIVAHIDHGKSTLADRLIEATGTLTEREMDTQVLDNMDLEKERGITIKSQAVRLIYKRDTGEEYTLNLIDTPGHVDFNYEVSRSLAACEGAILVVDATQGIQAQTLANCYLALDNDLEIVPVINKIDLPSARPEEVKQEIEDVIGIEAEDAPLVSAKTGLNIKDALEAIVSKVPAPYGDEKAPLKALIFDSYYDSYKGVVCHIRVKEGTIREGTEIKLMNTGKVYEVVEVGVFVPNYMPVDELKAGDVGYVTASIKNVRDARVGDTITEAKRSANEALSGYRPAVPMVFSGIYPVDGAKYEELKEALEKLQVNDAALSFEPETSIALGFGFRCGFLGLLHMDIIQERLEREFNLDIITTAPSVIYKITKTDGTLIELTNPTNMPSPSEIKLMEEPIVKSSIITPSDYVGAVMDLAQNRRGIFKDMQYLDTTRVSLNYEIPLNEIIYDFFDALKSRTRGYASFDYELIGYKDADLVKLDILLNADVVDALSMIVPRERAYAKGRNMAQKLKEIIPRQMFEIPIQAAVGAKIIARETIKAMRKDVLAKCYGGDISRKRKLLEKQKEGKKRMRQVGSVEVPQEAFMAVLKTEE.

Positions 7–189 constitute a tr-type G domain; that stretch reads KYIRNFSIVA…AIVSKVPAPY (183 aa). GTP is bound by residues 19 to 24 and 136 to 139; these read DHGKST and NKID.

This sequence belongs to the TRAFAC class translation factor GTPase superfamily. Classic translation factor GTPase family. LepA subfamily.

The protein localises to the cell membrane. The catalysed reaction is GTP + H2O = GDP + phosphate + H(+). Its function is as follows. Required for accurate and efficient protein synthesis under certain stress conditions. May act as a fidelity factor of the translation reaction, by catalyzing a one-codon backward translocation of tRNAs on improperly translocated ribosomes. Back-translocation proceeds from a post-translocation (POST) complex to a pre-translocation (PRE) complex, thus giving elongation factor G a second chance to translocate the tRNAs correctly. Binds to ribosomes in a GTP-dependent manner. The polypeptide is Elongation factor 4 (Clostridium botulinum (strain Loch Maree / Type A3)).